Consider the following 96-residue polypeptide: Co-chaperonin GroES (96 aa).

Belongs to the GroES chaperonin family. In terms of assembly, heptamer of 7 subunits arranged in a ring. Interacts with the chaperonin GroEL.

The protein resides in the cytoplasm. In terms of biological role, together with the chaperonin GroEL, plays an essential role in assisting protein folding. The GroEL-GroES system forms a nano-cage that allows encapsulation of the non-native substrate proteins and provides a physical environment optimized to promote and accelerate protein folding. GroES binds to the apical surface of the GroEL ring, thereby capping the opening of the GroEL channel. The protein is Co-chaperonin GroES of Buchnera aphidicola subsp. Myzus persicae (Myzus persicae primary endosymbiont).